The sequence spans 245 residues: Probable phosphatase PMI1003 (245 aa).

Histidine 7, histidine 9, histidine 15, histidine 40, glutamate 73, histidine 101, histidine 131, aspartate 192, and histidine 194 together coordinate Zn(2+).

The protein belongs to the PHP family. In terms of assembly, homotrimer. It depends on Zn(2+) as a cofactor.

This is Probable phosphatase PMI1003 from Proteus mirabilis (strain HI4320).